Reading from the N-terminus, the 359-residue chain is L-seryl-tRNA(Sec) kinase (359 aa).

ATP is bound at residue 25-32; sequence GLPAAGKS.

The protein belongs to the L-seryl-tRNA(Sec) kinase family. Mg(2+) serves as cofactor.

It catalyses the reaction L-seryl-tRNA(Sec) + ATP = O-phospho-L-seryl-tRNA(Sec) + ADP. The protein operates within aminoacyl-tRNA biosynthesis; selenocysteinyl-tRNA(Sec) biosynthesis; selenocysteinyl-tRNA(Sec) from L-seryl-tRNA(Sec) (archaeal/eukaryal route): step 1/2. Specifically phosphorylates seryl-tRNA(Sec) to O-phosphoseryl-tRNA(Sec), an activated intermediate for selenocysteine biosynthesis. No activity with other tRNAs has been detected. The sequence is that of L-seryl-tRNA(Sec) kinase (Pstk) from Mus musculus (Mouse).